Reading from the N-terminus, the 172-residue chain is NADH-quinone oxidoreductase subunit B (172 aa).

The [4Fe-4S] cluster site is built by Cys-46, Cys-47, Cys-111, and Cys-141.

The protein belongs to the complex I 20 kDa subunit family. NDH-1 is composed of 14 different subunits. Subunits NuoB, C, D, E, F, and G constitute the peripheral sector of the complex. The cofactor is [4Fe-4S] cluster.

Its subcellular location is the cell membrane. It carries out the reaction a quinone + NADH + 5 H(+)(in) = a quinol + NAD(+) + 4 H(+)(out). NDH-1 shuttles electrons from NADH, via FMN and iron-sulfur (Fe-S) centers, to quinones in the respiratory chain. The immediate electron acceptor for the enzyme in this species is believed to be a menaquinone. Couples the redox reaction to proton translocation (for every two electrons transferred, four hydrogen ions are translocated across the cytoplasmic membrane), and thus conserves the redox energy in a proton gradient. The protein is NADH-quinone oxidoreductase subunit B of Bacillus mycoides (strain KBAB4) (Bacillus weihenstephanensis).